A 718-amino-acid chain; its full sequence is Calpastatin (718 aa).

Disordered regions lie at residues methionine 1–threonine 189 and glutamate 210–aspartate 238. The span at proline 20–glutamine 29 shows a compositional bias: basic residues. 2 stretches are compositionally biased toward basic and acidic residues: residues aspartate 30–lysine 61 and histidine 68–aspartate 104. Lysine 32 participates in a covalent cross-link: Glycyl lysine isopeptide (Lys-Gly) (interchain with G-Cter in SUMO2). Lysine 49 carries the post-translational modification N6-acetyllysine. Serine 86 carries the post-translational modification Phosphoserine. Residues alanine 114–alanine 124 show a composition bias toward low complexity. A phosphoserine mark is found at serine 133, serine 222, and serine 243. The Inhibitory domain 1 repeat unit spans residues threonine 170–serine 222. Disordered regions lie at residues glutamate 266–aspartate 291 and glutamate 320–alanine 509. Residue serine 290 is modified to Blocked amino end (Ser); in form erythrocyte. Residues glutamate 307–proline 359 form an Inhibitory domain 2 repeat. 3 stretches are compositionally biased toward basic and acidic residues: residues glutamate 320 to cysteine 331, tyrosine 342 to lysine 377, and serine 384 to lysine 399. 3 positions are modified to phosphoserine: serine 367, serine 369, and serine 376. Residues alanine 400–proline 411 are compositionally biased toward low complexity. The residue at position 444 (serine 444) is a Phosphoserine. Over residues glycine 446–lysine 496 the composition is skewed to basic and acidic residues. One copy of the Inhibitory domain 3 repeat lies at alanine 450–proline 503. Phosphoserine occurs at positions 520, 531, 579, and 581. A disordered region spans residues valine 543–serine 718. Over residues proline 566–serine 579 the composition is skewed to basic and acidic residues. The stretch at proline 587 to lysine 640 is one Inhibitory domain 4 repeat. Composition is skewed to basic and acidic residues over residues proline 587–glycine 650 and glutamate 706–serine 718.

This sequence belongs to the protease inhibitor I27 (calpastatin) family.

Its function is as follows. Specific inhibition of calpain (calcium-dependent cysteine protease). Plays a key role in postmortem tenderization of meat and have been proposed to be involved in muscle protein degradation in living tissue. This chain is Calpastatin (CAST), found in Oryctolagus cuniculus (Rabbit).